The sequence spans 621 residues: Signal recognition particle receptor subunit alpha homolog (621 aa).

The tract at residues 1–158 (MFDQLAVFTP…KKFEQYFRIK (158 aa)) is SRX. Residues 167–217 (HINPDNFTKNGSVPQSHNKNTKKKLRDTKGKKQSTGNVGSGRKWGRDGGML) form a disordered region. Over residues 171-183 (DNFTKNGSVPQSH) the composition is skewed to polar residues. Basic residues predominate over residues 185–198 (KNTKKKLRDTKGKK). Ser-239 carries the phosphoserine modification. An NG domain region spans residues 398–620 (YVFSIVGVNG…SVKWAVNTLM (223 aa)). Residues 404 to 411 (GVNGVGKS) and 510 to 514 (DTAGR) each bind GTP. Ser-523 is subject to Phosphoserine. A GTP-binding site is contributed by 572–575 (SKCD).

Belongs to the GTP-binding SRP family. As to quaternary structure, heterodimer of an alpha and a beta chain.

The protein resides in the endoplasmic reticulum membrane. Component of the SRP (signal recognition particle) receptor (SR). Ensures, in conjunction with the signal recognition particle, the correct targeting of the nascent secretory proteins to the endoplasmic reticulum membrane system. GTP hydrolysis may enhance the fidelity of and provide unidirectionality to the targeting reaction. It is important but not essential for cell growth. May be directly involved in mitochondrial protein import. The sequence is that of Signal recognition particle receptor subunit alpha homolog (SRP101) from Saccharomyces cerevisiae (strain ATCC 204508 / S288c) (Baker's yeast).